The following is a 697-amino-acid chain: MNKSLGPVSFKDVAVDFTQEEWQQLDPEQKITYRDVMLENYSNLVSVGYHIIKPDVISKLEQGEEPWIVEGEFLLQSYPDEVWQTDDLIERIQEEENKPSRQTVFIETLIEERGNVPGKTFDVETNPVPSRKIAYKNSLCDSCEKCLTSVSEYISSDGSYARMKADECSGCGKSLLHIKLEKTHPGDQAYEFNQNGEPYTLNEESLYQKIRILEKPFEYIECQKAFQKDTVFVNHMEEKPYKWNGSEIAFLQMSDLTVHQTSHMEMKPYECSECGKSFCKKSKFIIHQRTHTGEKPYECNQCGKSFCQKGTLTVHQRTHTGEKPYECNECGKNFYQKLHLIQHQRTHSGEKPYECSYCGKSFCQKTHLTQHQRTHSGERPYVCHDCGKTFSQKSALNDHQKIHTGVKLYKCSECGKCFCRKSTLTTHLRTHTGEKPYECNECGKFFSRLSYLTVHYRTHSGEKPYECNECGKTFYLNSALMRHQRVHTGEKPYECNECGKLFSQLSYLTIHHRTHSGVKPYECSECGKTFYQNSALCRHRRIHKGEKPYECYICGKFFSQMSYLTIHHRIHSGEKPYECSECGKTFCQNSALNRHQRTHTGEKAYECYECGKCFSQMSYLTIHHRIHSGEKPFECNECGKAFSRMSYLTVHYRTHSGEKPYECTECGKKFYHKSAFNSHQRIHRRGNMNVIDVGRLL.

Lysine 3 is covalently cross-linked (Glycyl lysine isopeptide (Lys-Gly) (interchain with G-Cter in SUMO2)). Residues 8 to 79 (VSFKDVAVDF…EGEFLLQSYP (72 aa)) enclose the KRAB domain. Glycyl lysine isopeptide (Lys-Gly) (interchain with G-Cter in SUMO2) cross-links involve residues lysine 98, lysine 179, lysine 182, lysine 209, lysine 215, lysine 224, lysine 239, and lysine 267. 2 consecutive C2H2-type zinc fingers follow at residues 269 to 291 (YECS…QRTH) and 297 to 319 (YECN…QRTH). Glycyl lysine isopeptide (Lys-Gly) (interchain with G-Cter in SUMO2) cross-links involve residues lysine 309, lysine 323, lysine 337, and lysine 365. 8 C2H2-type zinc fingers span residues 325–347 (YECN…QRTH), 353–375 (YECS…QRTH), 381–403 (YVCH…QKIH), 409–431 (YKCS…LRTH), 437–459 (YECN…YRTH), 465–487 (YECN…QRVH), 493–515 (YECN…HRTH), and 521–543 (YECS…RRIH). Glycyl lysine isopeptide (Lys-Gly) (interchain with G-Cter in SUMO2) cross-links involve residues lysine 544 and lysine 547. 5 C2H2-type zinc fingers span residues 549 to 571 (YECY…HRIH), 577 to 599 (YECS…QRTH), 605 to 627 (YECY…HRIH), 633 to 655 (FECN…YRTH), and 661 to 683 (YECT…QRIH).

It belongs to the krueppel C2H2-type zinc-finger protein family. In terms of tissue distribution, widely expressed in various adult tissues and embryonic developmental stages (isoform 3).

It is found in the nucleus. Its function is as follows. Transcriptional repressor which suppresses activation protein 1 (AP-1)- and serum response element (SRE)-mediated transcriptional activity. This chain is Zinc finger protein 12 (ZNF12), found in Homo sapiens (Human).